Consider the following 235-residue polypeptide: Octanoyltransferase (235 aa).

One can recognise a BPL/LPL catalytic domain in the interval 52–229 (KNRQASMIFC…SICSALEYIN (178 aa)). Substrate-binding positions include 89 to 96 (RGGKITWH), 159 to 161 (AIG), and 172 to 174 (GFA). Catalysis depends on Cys-190, which acts as the Acyl-thioester intermediate.

It belongs to the LipB family.

The protein resides in the cytoplasm. It carries out the reaction octanoyl-[ACP] + L-lysyl-[protein] = N(6)-octanoyl-L-lysyl-[protein] + holo-[ACP] + H(+). It functions in the pathway protein modification; protein lipoylation via endogenous pathway; protein N(6)-(lipoyl)lysine from octanoyl-[acyl-carrier-protein]: step 1/2. In terms of biological role, catalyzes the transfer of endogenously produced octanoic acid from octanoyl-acyl-carrier-protein onto the lipoyl domains of lipoate-dependent enzymes. Lipoyl-ACP can also act as a substrate although octanoyl-ACP is likely to be the physiological substrate. The chain is Octanoyltransferase from Tropheryma whipplei (strain Twist) (Whipple's bacillus).